A 218-amino-acid chain; its full sequence is Small ribosomal subunit protein uS3c (218 aa).

In terms of domain architecture, KH type-2 spans 47–118 (IQKTIKISSG…KLNIAITRIA (72 aa)).

Belongs to the universal ribosomal protein uS3 family. In terms of assembly, part of the 30S ribosomal subunit.

Its subcellular location is the plastid. It localises to the chloroplast. The polypeptide is Small ribosomal subunit protein uS3c (rps3) (Lotus japonicus (Lotus corniculatus var. japonicus)).